Here is a 1205-residue protein sequence, read N- to C-terminus: ATP-dependent DNA helicase MER3 homolog (1205 aa).

The 196-residue stretch at 41–236 (PACFLSDVNM…WLAVPSEGIK (196 aa)) folds into the Helicase ATP-binding domain. An ATP-binding site is contributed by 54–61 (APTGSGKT). Residues 172–175 (DEVH) carry the DEAH box motif. The region spanning 266–467 (RLQSFIFDIL…CAVEHLNAEI (202 aa)) is the Helicase C-terminal domain. Positions 541-852 (PLEPGRLMTK…FEEYVGLDIH (312 aa)) constitute an SEC63 domain. Polar residues predominate over residues 1075-1091 (QKSEILNRTQGKNSTQL). The disordered stretch occupies residues 1075 to 1131 (QKSEILNRTQGKNSTQLAGKKAFEKSKTPDENSLHFVGKRDSSSEKSKALSKTPDEN). Positions 1095 to 1122 (KAFEKSKTPDENSLHFVGKRDSSSEKSK) are enriched in basic and acidic residues.

This sequence belongs to the helicase family. SKI2 subfamily. As to expression, transcribed preferentially in early stages of meiocyte development and during meiosis in young flowers.

The protein resides in the nucleus. Its subcellular location is the chromosome. It carries out the reaction Couples ATP hydrolysis with the unwinding of duplex DNA by translocating in the 3'-5' direction.. The catalysed reaction is ATP + H2O = ADP + phosphate + H(+). Functionally, DNA helicase required for crossover formation, complete synapsis of homologous chromosomes and bivalent formation during meiosis. Is specific to recombination events resulting in interference-sensitive crossovers (class I meiotic crossover). Works cooperatively with ZIP4 to promote crossovers. The sequence is that of ATP-dependent DNA helicase MER3 homolog from Oryza sativa subsp. japonica (Rice).